Consider the following 378-residue polypeptide: MASLRKTHPLLKIVNDNSIDLPTPQNISAWWNFGSLLGLCLVAQILTGLFLAMHYTPDINAAFSSVAHICRDVNHGWLIRNLHANGASFFFLCLYLHIGRGLYYGSYLNKGTWNTGILLLLLIMVTAFVGYVLPWGQMSFWGATVITSLLSALPYVGTDLVQWLWGGFSVDNATLTRFFAFHFFIPFIATAVVALHFLFLHETGSNNPTGLSSSADKVPLHPYFLYKDLLGFLLLLAPLTALAVFSPNLFGDPDNFLRANPMVTPTHIKPEWYFLFAYAILRAIPNKLGGVLALLASILVLAVVPFLHTSKQRSLALRPWSQLCLFTLVVTVLILTWIGGMPLEQPLTTVGQIASLLYFTIILFLMPMLGLIENKMLN.

The next 4 helical transmembrane spans lie at 33–53, 77–98, 113–133, and 178–198; these read FGSLLGLCLVAQILTGLFLAM, WLIRNLHANGASFFFLCLYLHI, WNTGILLLLLIMVTAFVGYVL, and FFAFHFFIPFIATAVVALHFL. Heme b is bound by residues H83 and H97. Heme b-binding residues include H182 and H196. Position 201 (H201) interacts with a ubiquinone. 4 helical membrane-spanning segments follow: residues 226–246, 288–308, 320–340, and 347–367; these read YKDLLGFLLLLAPLTALAVFS, LGGVLALLASILVLAVVPFLH, WSQLCLFTLVVTVLILTWIGG, and LTTVGQIASLLYFTIILFLMP.

It belongs to the cytochrome b family. The cytochrome bc1 complex contains 3 respiratory subunits (MT-CYB, CYC1 and UQCRFS1), 2 core proteins (UQCRC1 and UQCRC2) and probably 6 low-molecular weight proteins. Requires heme b as cofactor.

The protein resides in the mitochondrion inner membrane. Functionally, component of the ubiquinol-cytochrome c reductase complex (complex III or cytochrome b-c1 complex) that is part of the mitochondrial respiratory chain. The b-c1 complex mediates electron transfer from ubiquinol to cytochrome c. Contributes to the generation of a proton gradient across the mitochondrial membrane that is then used for ATP synthesis. The polypeptide is Cytochrome b (mt-cyb) (Indostomus paradoxus (Armoured stickleback)).